Reading from the N-terminus, the 594-residue chain is UvrABC system protein C (594 aa).

The GIY-YIG domain occupies His-13 to Ile-99. The UVR domain occupies Asp-205–Ile-240.

It belongs to the UvrC family. As to quaternary structure, interacts with UvrB in an incision complex.

It localises to the cytoplasm. The UvrABC repair system catalyzes the recognition and processing of DNA lesions. UvrC both incises the 5' and 3' sides of the lesion. The N-terminal half is responsible for the 3' incision and the C-terminal half is responsible for the 5' incision. The polypeptide is UvrABC system protein C (Helicobacter pylori (strain HPAG1)).